We begin with the raw amino-acid sequence, 44 residues long: Protein PsbN (44 aa).

The helical transmembrane segment at 6–26 (FFFTIFLWCLLLSVTGYSVYV) threads the bilayer.

This sequence belongs to the PsbN family.

Its subcellular location is the plastid. The protein resides in the chloroplast thylakoid membrane. Its function is as follows. May play a role in photosystem I and II biogenesis. In Oltmannsiellopsis viridis (Marine flagellate), this protein is Protein PsbN.